The primary structure comprises 125 residues: Protein Bouncer (125 aa).

The first 18 residues, 1–18 (MGCVLLFLLLVCVPVVLP), serve as a signal peptide directing secretion. Cystine bridges form between Cys23–Cys48, Cys26–Cys35, Cys42–Cys66, Cys72–Cys91, and Cys92–Cys97. A UPAR/Ly6 domain is found at 23–98 (CLFCPVTSLN…FSCCGGHYCN (76 aa)). N-linked (GlcNAc...) asparagine glycosylation is present at Asn32. Asn84 carries N-linked (GlcNAc...) asparagine glycosylation. Asn98 carries the GPI-anchor amidated asparagine lipid modification. The propeptide at 99 to 125 (SQPRAEPGGRLLLLLLPAAALTAAGAL) is removed in mature form.

It belongs to the SPACA4/bouncer family. In terms of assembly, interacts with spermatocyte complex composed of izumo1, spaca6 and tmem81. In terms of processing, N-glycosylated. Highly expressed in oocytes. Not expressed in testis.

It localises to the cell membrane. Its function is as follows. Oocyte-expressed fertilization factor that mediates sperm-egg binding and is essential for sperm entry into the egg. Necessary and sufficient to mediate species-specific gamete recognition and fertilization, which is essential for vertebrate species performing external fertilization. External fertilization cannot guarantee that only conspecific sperm reaches the egg by precopulatory mate choice: proteins such as Bouncer can therefore support the selection of conspecific sperm. This is Protein Bouncer from Danio rerio (Zebrafish).